Consider the following 1733-residue polypeptide: Serine-aspartate repeat-containing protein F (1733 aa).

An N-terminal signal peptide occupies residues 1–45 (MKKRRQGPINKRVDFLSNKVNKYSIRKFTVGTASILVGATLMFGA). The segment at 46-678 (ADNEAKAAED…GSSTAQGDNP (633 aa)) is ligand binding A region. Disordered regions lie at residues 51 to 269 (KAAE…SVND) and 332 to 351 (PLAL…ASPR). Over residues 61–74 (ASKEEQKGSRDNEN) the composition is skewed to basic and acidic residues. Composition is skewed to polar residues over residues 85 to 99 (GSHS…NNAT) and 146 to 168 (PKTS…DNLN). The span at 175–184 (KESKTDEHST) shows a compositional bias: basic and acidic residues. A compositionally biased stretch (polar residues) spans 186-226 (QAQMSTNKSNLDTNDSPTQSEKTSSQANNDSTDNQSAPSKQ). The span at 227-253 (LDSKPSEQKVYKTKFNDEPTQDVEHTT) shows a compositional bias: basic and acidic residues. 2 stretches are compositionally biased toward polar residues: residues 255–266 (KLKTPSVSTDSS) and 336–346 (NRSQSKNSPHK). 4 consecutive CNA-B domains span residues 679 to 797 (TYSL…YLTP), 798 to 907 (KYNV…FYKP), 908 to 1018 (TYNL…YKTP), and 1019 to 1129 (KYSV…FDDD). Residues 679 to 1129 (TYSLGDYVWL…SIDNGYFDDD (451 aa)) form a type I collagen binding region region. The segment at 862 to 890 (FETPEGYTPTKQNSGSDEGKDSNGTKTTV) is disordered. Residues 1085 to 1708 (KPEGMTQTTA…ANEDHDSKGT (624 aa)) form a disordered region. The span at 1107 to 1119 (EDVRVTITDHDDF) shows a compositional bias: basic and acidic residues. The segment covering 1125–1684 (YFDDDSDSDS…DSDSDSDSDS (560 aa)) has biased composition (acidic residues). Positions 1685 to 1706 (DSDKNAKDKLPDTGANEDHDSK) are enriched in basic and acidic residues. Residues 1694–1698 (LPDTG) carry the LPXTG sorting signal motif. A Pentaglycyl murein peptidoglycan amidated threonine modification is found at Thr1697. The propeptide at 1698–1733 (GANEDHDSKGTLLGTLFAGLGALLLGRRRKKDNKEK) is removed by sortase.

This sequence belongs to the serine-aspartate repeat-containing protein (SDr) family.

The protein localises to the secreted. It is found in the cell wall. Functionally, binds to type I collagen via alpha-2(I) or alpha-1(I) chains, although its affinity for the alpha-1(I) chain is significantly higher. Involved in bacterial adherence to transcutaneous drivelines from explanted ventricular assist devices. The chain is Serine-aspartate repeat-containing protein F (sdrF) from Staphylococcus epidermidis.